Consider the following 240-residue polypeptide: 2-C-methyl-D-erythritol 2,4-cyclodiphosphate synthase, apicoplast (240 aa).

Residues Asp71 and His73 each coordinate a divalent metal cation. Residues 71–73 (DIH) and 115–116 (HS) each bind 4-CDP-2-C-methyl-D-erythritol 2-phosphate. His123 is an a divalent metal cation binding site. 4-CDP-2-C-methyl-D-erythritol 2-phosphate-binding positions include 137–139 (DIG), 142–146 (FPDKD), 181–187 (AQVPKIS), and 212–214 (GKT).

Belongs to the IspF family. As to quaternary structure, homotrimer. It depends on a divalent metal cation as a cofactor.

The protein localises to the plastid. The protein resides in the apicoplast. It carries out the reaction 4-CDP-2-C-methyl-D-erythritol 2-phosphate = 2-C-methyl-D-erythritol 2,4-cyclic diphosphate + CMP. The protein operates within isoprenoid biosynthesis; isopentenyl diphosphate biosynthesis via DXP pathway; isopentenyl diphosphate from 1-deoxy-D-xylulose 5-phosphate: step 4/6. In terms of biological role, in the mevalonate-independent isoprenoid biosynthetic pathway, converts 4-diphosphocytidyl-2C-methyl-D-erythritol 2-phosphate into 2C-methyl-D-erythritol 2,4-cyclodiphosphate and CMP. In Plasmodium falciparum (isolate 3D7), this protein is 2-C-methyl-D-erythritol 2,4-cyclodiphosphate synthase, apicoplast.